We begin with the raw amino-acid sequence, 84 residues long: Putative membrane protein insertion efficiency factor (84 aa).

Belongs to the UPF0161 family.

The protein localises to the cell inner membrane. Its function is as follows. Could be involved in insertion of integral membrane proteins into the membrane. This chain is Putative membrane protein insertion efficiency factor, found in Shewanella oneidensis (strain ATCC 700550 / JCM 31522 / CIP 106686 / LMG 19005 / NCIMB 14063 / MR-1).